A 154-amino-acid chain; its full sequence is Large ribosomal subunit protein bL19 (154 aa).

The interval 1–33 (MAADPKDTTVTDENTETAATAEVETVASAPTSP) is disordered. Residues 16 to 27 (ETAATAEVETVA) show a composition bias toward low complexity.

Belongs to the bacterial ribosomal protein bL19 family.

Functionally, this protein is located at the 30S-50S ribosomal subunit interface and may play a role in the structure and function of the aminoacyl-tRNA binding site. The chain is Large ribosomal subunit protein bL19 from Parasynechococcus marenigrum (strain WH8102).